A 3342-amino-acid chain; its full sequence is Large tegument protein deneddylase (3342 aa).

The tract at residues 1–302 (MTDSTDSRQA…SRIYGTSDIV (302 aa)) is deubiquitination activity. A Peptidase C76 domain is found at 78–298 (VAVGIRNQFA…ISTVSRIYGT (221 aa)). Catalysis depends on residues Cys98, Asp232, and His234. The interval 472–554 (RRPLWTPQSS…SPTTSNRGED (83 aa)) is disordered. A compositionally biased stretch (low complexity) spans 480–494 (SSSENISLDGSSSSL). Positions 514–526 (VTSTESSDVTENV) are enriched in polar residues. The interval 630-656 (LYVCMMDIFARLFNYIIENGARTTSDR) is interaction with inner tegument protein. 3 disordered regions span residues 2584 to 2603 (DGDA…TYAD), 2654 to 2987 (PQIG…SRKH), and 3196 to 3279 (PKHD…SSTS). Composition is skewed to pro residues over residues 2701 to 2743 (TPAP…PKPK), 2751 to 2777 (KPSP…PKPK), 2785 to 2799 (KPTP…SKPK), 2823 to 2837 (KPSP…PKPK), and 2845 to 2897 (KPTP…PKPK). Over residues 2911–2947 (NSDSKTSPVPNPNTFSASKIPPTSSIAEETKPCQSNL) the composition is skewed to polar residues. Positions 3264-3279 (HVSGSTDTTTDGSSTS) are enriched in low complexity.

Belongs to the herpesviridae large tegument protein family. In terms of assembly, interacts with host CUL1 and CUL4A; these interactions inhibit the E3 ligase activity of cullins. Interacts with inner tegument protein. Interacts with capsid vertex specific component CVC2. Interacts with the major capsid protein/MCP.

It is found in the virion tegument. Its subcellular location is the host cytoplasm. The protein resides in the host nucleus. It catalyses the reaction Thiol-dependent hydrolysis of ester, thioester, amide, peptide and isopeptide bonds formed by the C-terminal Gly of ubiquitin (a 76-residue protein attached to proteins as an intracellular targeting signal).. Large tegument protein that plays multiple roles in the viral cycle. During viral entry, remains associated with the capsid while most of the tegument is detached and participates in the capsid transport toward the host nucleus. Plays a role in the routing of the capsid at the nuclear pore complex and subsequent uncoating. Within the host nucleus, acts as a deneddylase and promotes the degradation of nuclear CRLs (cullin-RING ubiquitin ligases) and thereby stabilizes nuclear CRL substrates, while cytoplasmic CRLs remain unaffected. These modifications prevent host cell cycle S-phase progression and create a favorable environment allowing efficient viral genome replication. Participates later in the secondary envelopment of capsids. Indeed, plays a linker role for the association of the outer viral tegument to the capsids together with the inner tegument protein. The protein is Large tegument protein deneddylase (MDV049) of Gallus gallus (Chicken).